We begin with the raw amino-acid sequence, 190 residues long: Imidazoleglycerol-phosphate dehydratase (190 aa).

The protein belongs to the imidazoleglycerol-phosphate dehydratase family.

It is found in the cytoplasm. It catalyses the reaction D-erythro-1-(imidazol-4-yl)glycerol 3-phosphate = 3-(imidazol-4-yl)-2-oxopropyl phosphate + H2O. It functions in the pathway amino-acid biosynthesis; L-histidine biosynthesis; L-histidine from 5-phospho-alpha-D-ribose 1-diphosphate: step 6/9. The polypeptide is Imidazoleglycerol-phosphate dehydratase (Methanococcus maripaludis (strain C5 / ATCC BAA-1333)).